Here is an 847-residue protein sequence, read N- to C-terminus: Endo-beta-N-acetylglucosaminidase EndoSd (847 aa).

A signal peptide spans 1–36 (MDKRLLVKRTLGCVCAATLMGAILATHHDSLISVKA). One can recognise a GH18 domain in the interval 65 to 377 (PLYAGYFRTW…HPVVDNISHT (313 aa)). His107 provides a ligand contact to a glycoprotein. Residue Glu186 is the Proton donor of the active site. Residues Glu188, Gln250, Tyr252, Glu288, Glu289, Asn295, and Tyr339 each contribute to the a glycoprotein site. LRR repeat units lie at residues 423 to 446 (LERY…LEKL), 447 to 470 (SHLQ…ILPE), 483 to 506 (MTGL…DVNG), and 507 to 530 (LTHL…ADRK). A carbohydrate-binding module (CBM) region spans residues 683–836 (MENLAKGAKV…YTELQILGQR (154 aa)). The Ca(2+) site is built by Lys704, Asp707, and Glu829.

It belongs to the glycosyl hydrolase 18 family.

It localises to the secreted. The protein resides in the host extracellular space. The enzyme catalyses an N(4)-(oligosaccharide-(1-&gt;3)-[oligosaccharide-(1-&gt;6)]-beta-D-Man-(1-&gt;4)-beta-D-GlcNAc-(1-&gt;4)-alpha-D-GlcNAc)-L-asparaginyl-[protein] + H2O = an oligosaccharide-(1-&gt;3)-[oligosaccharide-(1-&gt;6)]-beta-D-Man-(1-&gt;4)-D-GlcNAc + N(4)-(N-acetyl-beta-D-glucosaminyl)-L-asparaginyl-[protein]. Its function is as follows. Endoglucosidase that acts as a host immune evasion factor by mediating hydrolysis of the N-linked glycan from the Fc region of host immunoglobulin-gamma (IgG) during infection. Specifically catalyzes the hydrolysis of the beta-1,4 linkage between the first two N-acetylglucosamine residues of the complex-type N-linked glycan located on 'Asn-297' of the Fc region of IgG antibodies (IGHG1, IGHG2, IGHG3 or IGHG4), thereby preventing interaction between IgGs and Fc receptors and ability to activate the complement pathway. Shows a specificity for biantennary complex type N-glycans; does neither cleave larger complex type glycans nor oligomannose and nor hybrid-type glycans. Specifically acts on IgGs; does not act on immunoglobulin alpha, beta, delta or mu. The sequence is that of Endo-beta-N-acetylglucosaminidase EndoSd from Streptococcus dysgalactiae.